The chain runs to 144 residues: Small polypeptide DEVIL 18 (144 aa).

Low complexity predominate over residues 30–58 (SFSTKTSSSSSKPVFTRSFSTKPTSYSSS). The tract at residues 30 to 89 (SFSTKTSSSSSKPVFTRSFSTKPTSYSSSEPIFRRSFSAKPTSSKSPFLSRSGSTKCPVD) is disordered. The chain crosses the membrane as a helical span at residues 42 to 58 (PVFTRSFSTKPTSYSSS). Over residues 68–84 (AKPTSSKSPFLSRSGST) the composition is skewed to polar residues. The interval 108–139 (SVTRKCRNMAKEHKSRFYIMKRCVLMLVCWHK) is required for DVL/RTFL small polypeptide activity.

This sequence belongs to the DVL/RTFL small polypeptides family.

The protein localises to the cell membrane. Functionally, small polypeptide acting as a regulatory molecule which coordinates cellular responses required for differentiation, growth and development, probably by restricting polar cell proliferation in lateral organs and coordinating socket cell recruitment and differentiation at trichome sites. This Arabidopsis thaliana (Mouse-ear cress) protein is Small polypeptide DEVIL 18.